The primary structure comprises 2138 residues: Conidial yellow pigment biosynthesis polyketide synthase melA (2138 aa).

The tract at residues 8 to 244 is N-terminal acylcarrier protein transacylase domain (SAT); the sequence is YLFGDQTADF…TRVPIHGPYH (237 aa). A Ketosynthase family 3 (KS3) domain is found at 373–804; the sequence is QSKIAIIGLS…GGNTALMVED (432 aa). Residues cysteine 545, histidine 680, and histidine 722 each act as for beta-ketoacyl synthase activity in the active site. The malonyl-CoA:ACP transacylase (MAT) domain stretch occupies residues 910-1229; the sequence is FVFTGQGAQY…VSALYMAGIE (320 aa). The active-site For acyl/malonyl transferase activity is serine 999. A product template (PT) domain region spans residues 1288–1601; that stretch reads SSAAQRVLET…RKILDMALPP (314 aa). The interval 1292–1423 is N-terminal hotdog fold; the sequence is QRVLETSGDN…CNIKFFDPSP (132 aa). Residues 1292–1596 enclose the PKS/mFAS DH domain; that stretch reads QRVLETSGDN…FQGLARKILD (305 aa). Catalysis depends on histidine 1324, which acts as the Proton acceptor; for dehydratase activity. Positions 1451–1596 are C-terminal hotdog fold; it reads AHRMKRGMVY…FQGLARKILD (146 aa). Aspartate 1509 functions as the Proton donor; for dehydratase activity in the catalytic mechanism. One can recognise a Carrier 1 domain in the interval 1640 to 1714; the sequence is PSMATRALAI…DFKHLLAQMG (75 aa). Serine 1674 carries the post-translational modification O-(pantetheine 4'-phosphoryl)serine. The disordered stretch occupies residues 1712–1758; that stretch reads QMGPGESSDGSSSEGDMSSAASSTDLSSPNTSGLPTPANEKSMTHGL. The span at 1713–1739 shows a compositional bias: low complexity; it reads MGPGESSDGSSSEGDMSSAASSTDLSS. The segment covering 1740–1758 has biased composition (polar residues); sequence PNTSGLPTPANEKSMTHGL. The region spanning 1759–1836 is the Carrier 2 domain; sequence QGQNDSMRQI…DIETTLDLKP (78 aa). Serine 1796 bears the O-(pantetheine 4'-phosphoryl)serine mark. Residues 1863-2135 form a claisen cyclase domain region; sequence TQHPPATSIL…ELARFIANSM (273 aa). Serine 1953 (for Claisen cyclase activity) is an active-site residue.

It carries out the reaction 6 malonyl-CoA + acetyl-CoA + 6 H(+) = naphtopyrone YWA1 + 6 CO2 + 7 CoA + H2O. Its pathway is pigment biosynthesis. It participates in polyketide biosynthesis; heptaketide naphthopyrone YWA1 biosynthesis. Its function is as follows. Non-reducing polyketide synthase involved in the biosynthesis of a yellow conidial pigment. Probably forms the heptaketide naphthopyrene YWA1 via condensation of acetate units. The chain is Conidial yellow pigment biosynthesis polyketide synthase melA from Penicillium expansum (Blue mold rot fungus).